Here is a 474-residue protein sequence, read N- to C-terminus: Transcription termination factor Rho (474 aa).

Residues 1 to 60 (MTEELDNTPSPAGDIPQETLPKPLPAPEETAGEQPAAAPEENRGNAVREEEEAAPVLEQI) are disordered. One can recognise a Rho RNA-BD domain in the interval 107 to 182 (EVVVSGVMEQ…ASVISVEDIP (76 aa)). Residues 226-231 (GKGQRG), 238-243 (RGGKTV), and Arg269 each bind ATP.

This sequence belongs to the Rho family. As to quaternary structure, homohexamer. The homohexamer assembles into an open ring structure.

Facilitates transcription termination by a mechanism that involves Rho binding to the nascent RNA, activation of Rho's RNA-dependent ATPase activity, and release of the mRNA from the DNA template. The chain is Transcription termination factor Rho from Akkermansia muciniphila (strain ATCC BAA-835 / DSM 22959 / JCM 33894 / BCRC 81048 / CCUG 64013 / CIP 107961 / Muc).